The following is a 416-amino-acid chain: Probable 26S proteasome regulatory subunit rpn-6.2 (416 aa).

A PCI domain is found at 217–386 (YKTSFSYFYE…DTVVVYPKAD (170 aa)).

This sequence belongs to the proteasome subunit S9 family. In terms of assembly, component of the lid subcomplex of the 19S proteasome regulatory particle complex (also named PA700 complex). The 26S proteasome consists of a 20S proteasome core and two 19S regulatory subunits.

Its function is as follows. Component of the lid subcomplex of the 26S proteasome, a multiprotein complex involved in the ATP-dependent degradation of ubiquitinated proteins. In the complex, rpn-6.2 is required for proteasome assembly. This is Probable 26S proteasome regulatory subunit rpn-6.2 (rpn-6.2) from Caenorhabditis elegans.